The primary structure comprises 321 residues: Basic leucine zipper 34 (321 aa).

The disordered stretch occupies residues 97–189; it reads TDDDNLHSNP…SGNRILDPKR (93 aa). 3 stretches are compositionally biased toward low complexity: residues 110 to 133, 145 to 155, and 172 to 182; these read NNKNNNVGPTGSSSNTSTPSNSFN, NMNNNINNNYN, and SNNNSGDSSGN. The bZIP domain occupies 186-238; the sequence is DPKRVKRILANRQSAQRSRVRKLQYISELERSVTSLQAEVSVLSPRVAFLDHQ. The interval 188 to 207 is basic motif; the sequence is KRVKRILANRQSAQRSRVRK. The tract at residues 214 to 235 is leucine-zipper; the sequence is LERSVTSLQAEVSVLSPRVAFL.

Forms heterodimers with BZIP18, BZIP43 and VIP1/BZIP51. Expressed in vascular tissues of leaves, stems and siliques, anthers, filaments, tapetum, mature pollen grains, pistil vascular tissues and papillar cells, and funiculi.

It is found in the nucleus. Functionally, transcriptional activator involved in the sporophytic control of cell wall patterning and gametophytic control of pollen development. May play a role in the control of metabolic pathways regulating cellular transport and lipid metabolism. The chain is Basic leucine zipper 34 from Arabidopsis thaliana (Mouse-ear cress).